The primary structure comprises 160 residues: 3-dehydroquinate dehydratase (160 aa).

Tyrosine 22 (proton acceptor) is an active-site residue. Asparagine 73, histidine 79, and aspartate 86 together coordinate substrate. The active-site Proton donor is the histidine 99. Residues 100 to 101 (IS) and arginine 110 each bind substrate.

It belongs to the type-II 3-dehydroquinase family. As to quaternary structure, homododecamer.

It carries out the reaction 3-dehydroquinate = 3-dehydroshikimate + H2O. It participates in metabolic intermediate biosynthesis; chorismate biosynthesis; chorismate from D-erythrose 4-phosphate and phosphoenolpyruvate: step 3/7. Functionally, catalyzes a trans-dehydration via an enolate intermediate. This chain is 3-dehydroquinate dehydratase, found in Sulfurimonas denitrificans (strain ATCC 33889 / DSM 1251) (Thiomicrospira denitrificans (strain ATCC 33889 / DSM 1251)).